Here is a 531-residue protein sequence, read N- to C-terminus: Dimethylnonatriene synthase (531 aa).

A helical membrane pass occupies residues 6–26 (TMSVAMALAAAIFVVLCSVVA). Cys-464 contacts heme.

Belongs to the cytochrome P450 family. Heme serves as cofactor.

It is found in the membrane. The enzyme catalyses (6E,10E)-geranyllinalool + reduced [NADPH--hemoprotein reductase] + O2 = (3E,7E)-4,8,12-trimethyltrideca 1,3,7,11-tetraene + but-3-en-2-one + oxidized [NADPH--hemoprotein reductase] + 2 H2O + H(+). The catalysed reaction is (3S,6E)-nerolidol + reduced [NADPH--hemoprotein reductase] + O2 = (3E)-4,8-dimethylnona-1,3,7-triene + but-3-en-2-one + oxidized [NADPH--hemoprotein reductase] + 2 H2O + H(+). It functions in the pathway secondary metabolite biosynthesis; terpenoid biosynthesis. Involved in the biosynthesis of homoterpenes, attractants of herbivores parasitoids and predators (e.g. predatory mites and parasitoid wasps). Component of the volatile terpenes biosynthesis pathways. Converts mainly nerolidol to dimethylnonatriene (DMNT) and, to a lower extent, geranyllinalool to trimethyltridecatetraene (TMTT). This is Dimethylnonatriene synthase from Zea mays (Maize).